The following is a 141-amino-acid chain: Galactose-6-phosphate isomerase subunit LacA 1 (141 aa).

This sequence belongs to the LacAB/RpiB family. In terms of assembly, heteromultimeric protein consisting of LacA and LacB.

It carries out the reaction aldehydo-D-galactose 6-phosphate = keto-D-tagatose 6-phosphate. It participates in carbohydrate metabolism; D-galactose 6-phosphate degradation; D-tagatose 6-phosphate from D-galactose 6-phosphate: step 1/1. In Streptococcus pyogenes serotype M6 (strain ATCC BAA-946 / MGAS10394), this protein is Galactose-6-phosphate isomerase subunit LacA 1.